Reading from the N-terminus, the 395-residue chain is Accessory Sec system protein translocase subunit SecY2 (395 aa).

The next 10 membrane-spanning stretches (helical) occupy residues Val13–Phe33, Ile63–Leu83, Leu102–Phe122, Gly128–Leu148, Val157–Ile177, Trp190–Phe210, Met239–Gly259, Val272–Val292, Leu326–Leu346, and Tyr355–Ile375.

The protein belongs to the SecY/SEC61-alpha family. SecY2 subfamily. Component of the accessory SecA2/SecY2 protein translocase complex required to export cell wall proteins. May form heterotrimers with SecE and SecG subunits.

The protein resides in the cell membrane. Part of the accessory SecA2/SecY2 system specifically required for export of possible cell wall proteins. The central subunit of a protein translocation channel. In Lactobacillus johnsonii (strain CNCM I-12250 / La1 / NCC 533), this protein is Accessory Sec system protein translocase subunit SecY2.